The chain runs to 481 residues: Dynein axonemal assembly factor 8 (481 aa).

Disordered stretches follow at residues 70 to 91 (DESG…LVPG), 131 to 233 (LDTK…EGRP), 306 to 397 (TWKV…PVAS), and 415 to 454 (RAFR…KKHI). A phosphoserine mark is found at S83, S145, and S147. Polar residues predominate over residues 144–155 (GSQSPPWSSQGE). Residues 163 to 176 (GKLKTEPSDTDFKN) are compositionally biased toward basic and acidic residues. The segment covering 177–188 (SAKRRALRRERR) has biased composition (basic residues). Residues 198-211 (KVTQAAQNPASGDQ) show a composition bias toward polar residues. Residues 310–322 (SADKLQDTEEQVA) are compositionally biased toward basic and acidic residues. The segment covering 323 to 336 (RTRSASAESGFQTE) has biased composition (polar residues). S328 carries the post-translational modification Phosphoserine. Basic and acidic residues-rich tracts occupy residues 337–349 (RVQK…RLKT) and 359–380 (RLTE…HSSS).

The protein resides in the dynein axonemal particle. It is found in the cytoplasm. In terms of biological role, in cyliated cells, dynein axonemal particle-specific protein required for deployment of ODA to the axoneme. Interacts with outer dynein arm (ODA) subunits. The protein is Dynein axonemal assembly factor 8 (Dnaaf8) of Rattus norvegicus (Rat).